Here is a 240-residue protein sequence, read N- to C-terminus: MSQKGLIYSFVAKGTVVLAEHTPYSGNFSTIAVQCLQKLPTNSSKYTYSCDGHTFNFLVDNGFVFLVVADESTGRSVPFVFLERVKEDFKKRYEASIKNDERHPLADEDEDDDLFGDRFSVAYNLDREFGPILKEHMQYCMSHPEEMSKLSKLKAQITEVKGIMMDNIEKVLDRGEKIELLVDKTENLQFQADSFQRQGRQLRRKMWLQSLQMKLMVAGAVFSFILIVWVVACGGFKCSS.

The Cytoplasmic segment spans residues 1–215 (MSQKGLIYSF…MWLQSLQMKL (215 aa)). Residues 6–133 (LIYSFVAKGT…NLDREFGPIL (128 aa)) form the Longin domain. One can recognise a v-SNARE coiled-coil homology domain in the interval 149–209 (KLSKLKAQIT…RQLRRKMWLQ (61 aa)). The chain crosses the membrane as a helical; Anchor for type IV membrane protein span at residues 216–236 (MVAGAVFSFILIVWVVACGGF). The Vesicular portion of the chain corresponds to 237 to 240 (KCSS).

It belongs to the synaptobrevin family. Interacts with subunits of the class C core vacuole/endosome tethering (CORVET) complex including VPS11, VCL1, VPS18, VPS33, VPS3 and VPS8. Highly expressed in flowers. Detected in leaves, stems and roots.

The protein localises to the early endosome membrane. Its subcellular location is the endosome membrane. In terms of biological role, involved in the targeting and/or fusion of transport vesicles to their target membrane. This is Vesicle-associated membrane protein 727 (VAMP727) from Arabidopsis thaliana (Mouse-ear cress).